We begin with the raw amino-acid sequence, 209 residues long: Tektin bundle-interacting protein 1 (209 aa).

As to quaternary structure, microtubule inner protein component of sperm flagellar doublet microtubules.

It localises to the cytoplasm. Its subcellular location is the cytoskeleton. The protein resides in the cilium axoneme. It is found in the flagellum axoneme. Microtubule inner protein (MIP) part of the dynein-decorated doublet microtubules (DMTs) in cilia axoneme, which is required for motile cilia beating. Located at the center of the tektin bundle where may function to recruit tektins or stabilize the bundle. The polypeptide is Tektin bundle-interacting protein 1 (TEKTIP1) (Macaca fascicularis (Crab-eating macaque)).